We begin with the raw amino-acid sequence, 343 residues long: Probable siderophore transport system permease protein YfhA (343 aa).

9 helical membrane passes run 15-35, 69-89, 97-117, 130-150, 160-180, 204-224, 249-269, 289-309, and 317-337; these read WIVF…SAGL, ILTA…LQGL, PDII…MMFF, WLPA…YLLA, LVLI…LLMI, QHVK…FVAL, FFLL…AGTI, GALL…ADIV, and VEVP…IYLL.

The protein belongs to the binding-protein-dependent transport system permease family. FecCD subfamily. As to quaternary structure, the complex is composed of one ATP-binding protein (YusV), two transmembrane proteins (YfiZ and YfhA) and a solute-binding protein (YfiY).

The protein resides in the cell membrane. Functionally, part of the ABC transporter complex YfiYZ/YfhA/YusV involved in import of the iron-hydroxamate siderophores schizokinen, arthrobactin and corprogen. The sequence is that of Probable siderophore transport system permease protein YfhA (yfhA) from Bacillus subtilis (strain 168).